A 276-amino-acid chain; its full sequence is Protein canopy homolog 3 (276 aa).

A signal peptide spans 1-16; the sequence is MNVFISVVLFLGSARA. A Saposin B-type domain is found at 30–269; that stretch reads NKCEVCKFVS…EEEIQKKVPL (240 aa). 3 disulfide bridges follow: cysteine 32–cysteine 190, cysteine 35–cysteine 178, and cysteine 88–cysteine 150. The stretch at 137–162 forms a coiled coil; sequence NETSAEVADLKKQCDVMVEQYEDVIE. Positions 206-276 are disordered; the sequence is AEDKKKKKGK…VPLNQPKTEL (71 aa). Basic residues-rich tracts occupy residues 210–219 and 228–239; these read KKKKGKKKKG and KEKKVKKKKKKS. A compositionally biased stretch (basic and acidic residues) spans 240 to 252; it reads KISDSESSKRRME.

Belongs to the canopy family.

The protein localises to the endoplasmic reticulum. In terms of biological role, toll-like receptor (TLR)-specific co-chaperone for HSP90B1. Required for proper TLR folding and hence controls TLR exit from the endoplasmic reticulum. Consequently, required for immune responses. The sequence is that of Protein canopy homolog 3 (cnpy3) from Danio rerio (Zebrafish).